Here is a 181-residue protein sequence, read N- to C-terminus: Oligoribonuclease (181 aa).

In terms of domain architecture, Exonuclease spans 8 to 171 (LIWVDLEMTG…EDIKESIAEM (164 aa)). Tyrosine 129 is an active-site residue.

Belongs to the oligoribonuclease family.

The protein resides in the cytoplasm. In terms of biological role, 3'-to-5' exoribonuclease specific for small oligoribonucleotides. This is Oligoribonuclease from Shewanella frigidimarina (strain NCIMB 400).